The chain runs to 95 residues: Exodeoxyribonuclease 7 small subunit (95 aa).

The segment at 65–95 (ETINPAETARPAKPENAPESPRMNDLFGTES) is disordered.

The protein belongs to the XseB family. As to quaternary structure, heterooligomer composed of large and small subunits.

The protein resides in the cytoplasm. It catalyses the reaction Exonucleolytic cleavage in either 5'- to 3'- or 3'- to 5'-direction to yield nucleoside 5'-phosphates.. Functionally, bidirectionally degrades single-stranded DNA into large acid-insoluble oligonucleotides, which are then degraded further into small acid-soluble oligonucleotides. This chain is Exodeoxyribonuclease 7 small subunit, found in Chlorobaculum tepidum (strain ATCC 49652 / DSM 12025 / NBRC 103806 / TLS) (Chlorobium tepidum).